The following is a 230-amino-acid chain: Fibrillarin-like rRNA/tRNA 2'-O-methyltransferase (230 aa).

S-adenosyl-L-methionine contacts are provided by residues 87–88 (TT), 105–106 (EF), 130–131 (DA), and 150–153 (DVAQ).

This sequence belongs to the methyltransferase superfamily. Fibrillarin family. Interacts with nop5. Component of box C/D small ribonucleoprotein (sRNP) particles that contain rpl7ae, FlpA and nop5, plus a guide RNA.

Its function is as follows. Involved in pre-rRNA and tRNA processing. Utilizes the methyl donor S-adenosyl-L-methionine to catalyze the site-specific 2'-hydroxyl methylation of ribose moieties in rRNA and tRNA. Site specificity is provided by a guide RNA that base pairs with the substrate. Methylation occurs at a characteristic distance from the sequence involved in base pairing with the guide RNA. The protein is Fibrillarin-like rRNA/tRNA 2'-O-methyltransferase of Methanococcus maripaludis (strain DSM 14266 / JCM 13030 / NBRC 101832 / S2 / LL).